Reading from the N-terminus, the 2009-residue chain is Rootletin (2009 aa).

Coiled coils occupy residues 74-265 (EMAS…VTSD) and 346-438 (ASLH…LRLQ). Disordered stretches follow at residues 462–519 (ALSD…CSDS), 575–594 (RDQT…EAQR), 636–665 (ELKR…LERS), 1180–1225 (EAQR…ELRS), and 1448–1501 (GRVS…EAVR). The segment covering 463-484 (LSDTESGVQLSSSERTADTSDG) has biased composition (polar residues). Coiled-coil stretches lie at residues 550 to 1058 (LGSV…LLAE) and 1091 to 1439 (LEME…GLRS). Residues 577–586 (QTAASAQAQE) show a composition bias toward low complexity. Basic and acidic residues predominate over residues 656–665 (ARARRELERS). 3 positions are modified to phosphoserine: serine 1453, serine 1463, and serine 1469. Tyrosine 1475 carries the post-translational modification Phosphotyrosine. Phosphoserine is present on residues serine 1476, serine 1479, serine 1483, serine 1489, and serine 1568. Positions 1479–1494 (SQPPSPGLIASPAPPD) are enriched in pro residues. Coiled coils occupy residues 1498 to 1697 (EAVR…GTLQ) and 1744 to 1998 (HLQK…RSSA). Residues 1957–2009 (QVQTERTLEARERAHRQRVSGLEEQVSTLKAQLHQELRRSSASVSLPPGTPEK) form a disordered region.

The protein belongs to the rootletin family. As to quaternary structure, homomer. Interacts with KLC3, NEK2 and the N-terminus of CEP250. Interacts with CEP44. Post-translationally, phosphorylated by NEK2 which may regulate its association with centrosomes. As to expression, highest expression detected in photoreceptor cells of retina. Expressed at lower levels in brain, trachea and kidney. Detected in all major ciliated epithelia. During embryonic development, enriched along the apical domains of neuroepithelium in brain ventricular zone, in primordia of retinal pigment epithelia and in neural retina.

It is found in the cytoplasm. The protein resides in the cytoskeleton. The protein localises to the microtubule organizing center. It localises to the centrosome. Its subcellular location is the centriole. It is found in the cilium basal body. Major structural component of the ciliary rootlet, a cytoskeletal-like structure in ciliated cells which originates from the basal body at the proximal end of a cilium and extends proximally toward the cell nucleus. Furthermore, is required for the correct positioning of the cilium basal body relative to the cell nucleus, to allow for ciliogenesis. Contributes to centrosome cohesion before mitosis. This chain is Rootletin, found in Mus musculus (Mouse).